The sequence spans 201 residues: 3-isopropylmalate dehydratase small subunit (201 aa).

It belongs to the LeuD family. LeuD type 1 subfamily. In terms of assembly, heterodimer of LeuC and LeuD.

The enzyme catalyses (2R,3S)-3-isopropylmalate = (2S)-2-isopropylmalate. Its pathway is amino-acid biosynthesis; L-leucine biosynthesis; L-leucine from 3-methyl-2-oxobutanoate: step 2/4. In terms of biological role, catalyzes the isomerization between 2-isopropylmalate and 3-isopropylmalate, via the formation of 2-isopropylmaleate. The polypeptide is 3-isopropylmalate dehydratase small subunit (Azorhizobium caulinodans (strain ATCC 43989 / DSM 5975 / JCM 20966 / LMG 6465 / NBRC 14845 / NCIMB 13405 / ORS 571)).